The following is a 607-amino-acid chain: MSEFDHVQFLKTLSSEPGVYCMLDSDNQVIYVGKAKHLKKRVSSYFRSNITDSKTRVLVSNICNVEVTLTNTETEALLLENNLIKKYQPRYNILLRDDKSYPYILLTNHKHPRLAFHRGSRKVKGEYFGPFPSAGAVSESLRLMQKIFPIRQCEDVYYRARSRPCLQYQLKRCSAPCVNKVSDEDYTEQVDYVRKFLTGKSHEVIADLIKKMEAASQQLNFELAAKVRDQIMLLRKMQEQQSISGNFAEMDVVGFAHLNGLNGIHLLMIRDHKVLGSKTYFPKVPKDSSEQEILTSFLGQYYLAPGATGRIAKEIILPFEIQESDVLGQALTQISERKVTLKVVTRGERAQYLQLANKNALNSITVKQSTQDSINKRYAQLKATLRLDDITRMECFDISHTMGENTVASCVVFDSQGPNTKEYRRYNVTGITGGDDYAAMEFALNKRYNKLVDEDKIPDVIFIDGGKGQLGRAEQYFATWPHAKMPLLVGVAKGTSRKPGLETLLIDGGRKTIPMDSDAPALHLIQHIRDESHRFAIAGHRNKRQKQRTQSLLEEINGVGAKRRQTLLKYLGGMQGVKAANIEQLKKVPGISPDMADKIFNHLHDKG.

Residues 15-93 (SEPGVYCMLD…IKKYQPRYNI (79 aa)) form the GIY-YIG domain. The 36-residue stretch at 202–237 (HEVIADLIKKMEAASQQLNFELAAKVRDQIMLLRKM) folds into the UVR domain.

Belongs to the UvrC family. In terms of assembly, interacts with UvrB in an incision complex.

It is found in the cytoplasm. Its function is as follows. The UvrABC repair system catalyzes the recognition and processing of DNA lesions. UvrC both incises the 5' and 3' sides of the lesion. The N-terminal half is responsible for the 3' incision and the C-terminal half is responsible for the 5' incision. The sequence is that of UvrABC system protein C from Pseudoalteromonas translucida (strain TAC 125).